The primary structure comprises 308 residues: Vacuolar lysine transporter YPQ1 (308 aa).

At M1 to T12 the chain is on the vacuolar side. N9 is a glycosylation site (N-linked (GlcNAc...) asparagine). The PQ-loop 1 domain occupies R10–L76. Residues L13–I33 form a helical membrane-spanning segment. Topologically, residues Y34 to G44 are cytoplasmic. The chain crosses the membrane as a helical span at residues L45–V65. Residues M66–H68 lie on the Vacuolar side of the membrane. Residues L69–G89 form a helical membrane-spanning segment. At Q90–D167 the chain is on the cytoplasmic side. A helical transmembrane segment spans residues I168–V188. A glycan (N-linked (GlcNAc...) asparagine) is linked at N189. At N189 to E205 the chain is on the vacuolar side. A helical membrane pass occupies residues L206–S226. The 64-residue stretch at M211–M274 folds into the PQ-loop 2 domain. Over R227–S244 the chain is Cytoplasmic. The helical transmembrane segment at F245–I265 threads the bilayer. Topologically, residues S266–S277 are vacuolar. A glycan (N-linked (GlcNAc...) asparagine) is linked at N275. The chain crosses the membrane as a helical span at residues W278–I298. Residues Y299–N308 lie on the Cytoplasmic side of the membrane.

The protein belongs to the laat-1 family.

Its subcellular location is the vacuole membrane. In terms of biological role, amino acid transporter that moves lysine into the vacuole. May also contribute to low affinity arginine import into the vacuole. Has also been suggested to mediate export of cationic amino acids from the vacuole. May function as an amino acid/proton antiporter. This Saccharomyces cerevisiae (strain ATCC 204508 / S288c) (Baker's yeast) protein is Vacuolar lysine transporter YPQ1 (YPQ1).